The sequence spans 386 residues: Zinc finger CCCH domain-containing protein 2 (386 aa).

2 consecutive C3H1-type zinc fingers follow at residues 116 to 143 (HYSG…HGVF) and 151 to 175 (RYRT…HTPD). Disordered regions lie at residues 180 to 200 (LPAQ…ESYD) and 220 to 252 (SSPT…RRGS). The segment covering 182–192 (AQQSSPRSVAS) has biased composition (polar residues). Positions 220–229 (SSPTSTLMSP) are enriched in low complexity. A compositionally biased stretch (pro residues) spans 230-241 (PKSPPSESPPLS).

The protein localises to the nucleus. In terms of biological role, involved in leaf senescence delay. May repress jasmonic acid (JA) signaling role in promoting leaf senescence. May regulate panicle development and pollination/fertilization process. This Oryza sativa subsp. japonica (Rice) protein is Zinc finger CCCH domain-containing protein 2.